The chain runs to 134 residues: Cytochrome b (134 aa).

Helical transmembrane passes span 33 to 53 (FGSL…FLAM), 77 to 98 (WILR…FLHV), and 113 to 133 (WNIG…GYVL). Residues H83 and H97 each coordinate heme b.

Belongs to the cytochrome b family. In terms of assembly, the cytochrome bc1 complex contains 11 subunits: 3 respiratory subunits (MT-CYB, CYC1 and UQCRFS1), 2 core proteins (UQCRC1 and UQCRC2) and 6 low-molecular weight proteins (UQCRH/QCR6, UQCRB/QCR7, UQCRQ/QCR8, UQCR10/QCR9, UQCR11/QCR10 and a cleavage product of UQCRFS1). This cytochrome bc1 complex then forms a dimer. Requires heme b as cofactor.

Its subcellular location is the mitochondrion inner membrane. Component of the ubiquinol-cytochrome c reductase complex (complex III or cytochrome b-c1 complex) that is part of the mitochondrial respiratory chain. The b-c1 complex mediates electron transfer from ubiquinol to cytochrome c. Contributes to the generation of a proton gradient across the mitochondrial membrane that is then used for ATP synthesis. The protein is Cytochrome b (MT-CYB) of Rhinolophus hipposideros (Lesser horseshoe bat).